The primary structure comprises 444 residues: Tubulin beta chain (444 aa).

Gln11, Glu69, Ser138, Gly142, Thr143, Gly144, Asn204, and Asn226 together coordinate GTP. Mg(2+) is bound at residue Glu69. The tract at residues 423 to 444 (QQYQDATAEEEGEFDDEEEMDV) is disordered. Residues 429-444 (TAEEEGEFDDEEEMDV) are compositionally biased toward acidic residues.

Belongs to the tubulin family. In terms of assembly, dimer of alpha and beta chains. A typical microtubule is a hollow water-filled tube with an outer diameter of 25 nm and an inner diameter of 15 nM. Alpha-beta heterodimers associate head-to-tail to form protofilaments running lengthwise along the microtubule wall with the beta-tubulin subunit facing the microtubule plus end conferring a structural polarity. Microtubules usually have 13 protofilaments but different protofilament numbers can be found in some organisms and specialized cells. Mg(2+) is required as a cofactor.

Its subcellular location is the cytoplasm. The protein resides in the cytoskeleton. Its function is as follows. Tubulin is the major constituent of microtubules, a cylinder consisting of laterally associated linear protofilaments composed of alpha- and beta-tubulin heterodimers. Microtubules grow by the addition of GTP-tubulin dimers to the microtubule end, where a stabilizing cap forms. Below the cap, tubulin dimers are in GDP-bound state, owing to GTPase activity of alpha-tubulin. In Euplotes focardii, this protein is Tubulin beta chain.